The chain runs to 623 residues: NAD-dependent malic enzyme, mitochondrial (623 aa).

The N-terminal 31 residues, 1-31, are a transit peptide targeting the mitochondrion; sequence MLVLCSRSRLTSSLIRRLKDQIANVSNHRSF. 2 residues coordinate fumarate: Arg88 and Arg122. Ser143 acts as the Proton donor in catalysis. Arg196 contacts (S)-malate. Arg196 contributes to the NAD(+) binding site. The active-site Proton acceptor is Lys214. A divalent metal cation-binding residues include Glu285 and Asp286. Residue Asn289 coordinates NAD(+). Asp309 contacts a divalent metal cation. Position 345 (Ala345) interacts with NAD(+). (S)-malate-binding residues include Asn464 and Asn509.

This sequence belongs to the malic enzymes family. Heterodimer of two related subunits. Mg(2+) is required as a cofactor. Requires Mn(2+) as cofactor.

The protein localises to the mitochondrion matrix. It catalyses the reaction (S)-malate + NAD(+) = pyruvate + CO2 + NADH. It functions in the pathway photosynthesis; C4 acid pathway. The sequence is that of NAD-dependent malic enzyme, mitochondrial from Amaranthus hypochondriacus (Prince-of-Wales feather).